We begin with the raw amino-acid sequence, 307 residues long: Ribosomal RNA small subunit methyltransferase H (307 aa).

S-adenosyl-L-methionine is bound by residues 38-40, Asp58, Phe82, Asp99, and Gln106; that span reads GGH.

It belongs to the methyltransferase superfamily. RsmH family.

The protein localises to the cytoplasm. The enzyme catalyses cytidine(1402) in 16S rRNA + S-adenosyl-L-methionine = N(4)-methylcytidine(1402) in 16S rRNA + S-adenosyl-L-homocysteine + H(+). In terms of biological role, specifically methylates the N4 position of cytidine in position 1402 (C1402) of 16S rRNA. This Variovorax paradoxus (strain S110) protein is Ribosomal RNA small subunit methyltransferase H.